Here is a 277-residue protein sequence, read N- to C-terminus: Putative phosphoenolpyruvate synthase regulatory protein (277 aa).

157 to 164 (GVSRSGKT) serves as a coordination point for ADP.

It belongs to the pyruvate, phosphate/water dikinase regulatory protein family. PSRP subfamily.

It catalyses the reaction [pyruvate, water dikinase] + ADP = [pyruvate, water dikinase]-phosphate + AMP + H(+). The catalysed reaction is [pyruvate, water dikinase]-phosphate + phosphate + H(+) = [pyruvate, water dikinase] + diphosphate. Its function is as follows. Bifunctional serine/threonine kinase and phosphorylase involved in the regulation of the phosphoenolpyruvate synthase (PEPS) by catalyzing its phosphorylation/dephosphorylation. The protein is Putative phosphoenolpyruvate synthase regulatory protein of Vibrio vulnificus (strain CMCP6).